The sequence spans 290 residues: MASIKEIKTQITSVVNTKKITKAMEMVAISKMRKTEERMSSGRPYSEIIRKVINHVAQGHLEYKHSYLETRKIKRIGLIIVSSDRGLCGSLNSNLFRKVLFKIQNFTQKNIPCDLILFGLKSLPVFKLCENNILSKITHLGEHPNILKVINGIDVLLKKYQIKRIDKIFIAYNEFHNKMSQYPKIIQLLPLSRIKSETISTKRWDYLYESESKLIIDSLFKRYIESQVYQSILENIASEHAARMMAMKTATENSTERIKELKLLYNKVRQATITQELTEIIAGASAVSTG.

This sequence belongs to the ATPase gamma chain family. F-type ATPases have 2 components, CF(1) - the catalytic core - and CF(0) - the membrane proton channel. CF(1) has five subunits: alpha(3), beta(3), gamma(1), delta(1), epsilon(1). CF(0) has three main subunits: a, b and c.

Its subcellular location is the cell membrane. Its function is as follows. Produces ATP from ADP in the presence of a proton gradient across the membrane. The gamma chain is believed to be important in regulating ATPase activity and the flow of protons through the CF(0) complex. In Buchnera aphidicola subsp. Diuraphis noxia, this protein is ATP synthase gamma chain.